The following is a 296-amino-acid chain: Nucleotide-binding protein spyM18_0713 (296 aa).

13–20 contacts ATP; that stretch reads GMSGAGKT. 63 to 66 contributes to the GTP binding site; that stretch reads DMRS.

Belongs to the RapZ-like family.

Functionally, displays ATPase and GTPase activities. The protein is Nucleotide-binding protein spyM18_0713 of Streptococcus pyogenes serotype M18 (strain MGAS8232).